We begin with the raw amino-acid sequence, 206 residues long: Small ribosomal subunit protein eS1 (206 aa).

It belongs to the eukaryotic ribosomal protein eS1 family.

The sequence is that of Small ribosomal subunit protein eS1 from Halobacterium salinarum (strain ATCC 29341 / DSM 671 / R1).